The primary structure comprises 594 residues: Metastasis-associated protein MTA3 (594 aa).

One can recognise a BAH domain in the interval 1–147 (MAANMYRVGD…PSLKTLLADK (147 aa)). The 112-residue stretch at 148–259 (GEIRVGPRYQ…SAISVLVPLG (112 aa)) folds into the ELM2 domain. One can recognise an SANT domain in the interval 266–318 (DEMEEWSASEASLFEEALEKYGKDFNDIRQDFLPWKSLTSIIEYYYMWKTTDR). The GATA-type; atypical zinc-finger motif lies at 379–406 (CESCYATQSHQWYSWGPPNMQCRLCAIC). Serine 428 and serine 430 each carry phosphoserine. Threonine 455 bears the Phosphothreonine mark. Serine 519 is modified (phosphoserine).

Belongs to the metastasis-associated protein family. Component of the nucleosome remodeling and deacetylase (NuRD) repressor complex, composed of core proteins MTA1, MTA2, MTA3, RBBP4, RBBP7, HDAC1, HDAC2, MBD2, MBD3, and peripherally associated proteins CDK2AP1, CDK2AP2, GATAD2A, GATAD2B, CHD3, CHD4 and CHD5. The exact stoichiometry of the NuRD complex is unknown, and some subunits such as MBD2 and MBD3, GATAD2A and GATAD2B, and CHD3, CHD4 and CHD5 define mutually exclusive NuRD complexes. Interacts with BCL6. Interacts with NACC2. Interacts with PWWP2B. Expressed in germinal centers of lymphoid tissues. No expression in nonepithelial cells.

The protein localises to the nucleus. It is found in the cytoplasm. In terms of biological role, acts as a component of the histone deacetylase NuRD complex which participates in the remodeling of chromatin. Plays a role in maintenance of the normal epithelial architecture through the repression of SNAI1 transcription in a histone deacetylase-dependent manner, and thus the regulation of E-cadherin levels. Contributes to transcriptional repression by BCL6. The chain is Metastasis-associated protein MTA3 (MTA3) from Homo sapiens (Human).